The sequence spans 260 residues: Flap endonuclease Xni (260 aa).

Asp109 is a Mg(2+) binding site. A 5'-3' exonuclease domain is found at 165-259 (VKPSQLADYW…DIRFTGPNKA (95 aa)). The K(+) site is built by Leu176, Pro185, Val187, and Ile190. Residues 189-194 (GIGPKA) form an interaction with DNA region.

The protein belongs to the Xni family. Requires Mg(2+) as cofactor. K(+) serves as cofactor.

In terms of biological role, has flap endonuclease activity. During DNA replication, flap endonucleases cleave the 5'-overhanging flap structure that is generated by displacement synthesis when DNA polymerase encounters the 5'-end of a downstream Okazaki fragment. In Vibrio parahaemolyticus serotype O3:K6 (strain RIMD 2210633), this protein is Flap endonuclease Xni.